The primary structure comprises 177 residues: Bifunctional protein PyrR (177 aa).

The short motif at 99–111 is the PRPP-binding element; it reads LVLIDDVIYKGRT.

It belongs to the purine/pyrimidine phosphoribosyltransferase family. PyrR subfamily.

The enzyme catalyses UMP + diphosphate = 5-phospho-alpha-D-ribose 1-diphosphate + uracil. Functionally, regulates the transcription of the pyrimidine nucleotide (pyr) operon in response to exogenous pyrimidines. In terms of biological role, also displays a weak uracil phosphoribosyltransferase activity which is not physiologically significant. This Picosynechococcus sp. (strain ATCC 27264 / PCC 7002 / PR-6) (Agmenellum quadruplicatum) protein is Bifunctional protein PyrR.